A 55-amino-acid polypeptide reads, in one-letter code: MAKDKDVRPIIKLKSTAGTGYTYVTRKNRRNDPDRLVLKKYDPKIRQHVEFREER.

It belongs to the bacterial ribosomal protein bL33 family.

In Paenarthrobacter aurescens (strain TC1), this protein is Large ribosomal subunit protein bL33.